Reading from the N-terminus, the 82-residue chain is Putative membrane protein insertion efficiency factor (82 aa).

It belongs to the UPF0161 family.

Its subcellular location is the cell inner membrane. In terms of biological role, could be involved in insertion of integral membrane proteins into the membrane. This chain is Putative membrane protein insertion efficiency factor, found in Rickettsia peacockii (strain Rustic).